Consider the following 1265-residue polypeptide: Protein transport protein SEC31 (1265 aa).

WD repeat units follow at residues 6 to 46 (EIAR…ELWD), 61 to 105 (TVDN…KTKD), 116 to 156 (KHTG…EPFA), 162 to 202 (TPMD…EVLH), 209 to 252 (GGRA…APEK), 256 to 296 (GHKK…KLGE), and 299 to 339 (TTAN…PSVS). One copy of the WD 8; interaction with SEC13 repeat lies at 380–403 (SFGFGSKLVIINTDSSGKSTVKVD). The span at 457–480 (KESLFEDANNDEKEATSPETKKEN) shows a compositional bias: basic and acidic residues. 3 disordered regions span residues 457 to 485 (KESLFEDANNDEKEATSPETKKENGEDDF), 765 to 784 (VKSSANAKIAKPASSSGQTR), and 793 to 1163 (PAYA…IPEN). Positions 794–810 (AYAPPVQAPPVQAPQPP) are enriched in pro residues. Low complexity-rich tracts occupy residues 811-824 (LVQQQQQQQQQQQP), 865-875 (TPSSLSGTTSG), 901-931 (AKTAAPRRAAAAATPPVSTPTPVSAPAFGSP), 939-951 (SQPGSVGSVSSAG), and 969-987 (SISRSTSRTTVPTSSTVPA). Residues 1004–1023 (SDASQPPSSGFASPTLNSSP) show a composition bias toward polar residues. Composition is skewed to pro residues over residues 1062–1071 (YAPPKNPYAV) and 1083–1101 (APPPPAPKLGSAAPPPPQP).

Belongs to the WD repeat SEC31 family. In terms of assembly, the COPII coat is composed of at least 5 proteins: the SEC23/24 complex, the SEC13/31 complex, and the protein SAR1. SEC13 and SEC31 make a 2:2 tetramer that forms the edge element of the COPII outer coat. The tetramer self-assembles in multiple copies to form the complete polyhedral cage. Interacts (via WD 8) with SEC13.

Its subcellular location is the cytoplasmic vesicle. The protein localises to the COPII-coated vesicle membrane. The protein resides in the endoplasmic reticulum membrane. Its function is as follows. Component of the coat protein complex II (COPII) which promotes the formation of transport vesicles from the endoplasmic reticulum (ER). The coat has two main functions, the physical deformation of the endoplasmic reticulum membrane into vesicles and the selection of cargo molecules. The chain is Protein transport protein SEC31 (PGA63) from Candida albicans (strain SC5314 / ATCC MYA-2876) (Yeast).